The primary structure comprises 439 residues: MGSMCIAMAPRTLLLLIGCQLALGFNEPLNVVSHLSDDWFLFGDSRSDCSYVENNGHPAFDWLDLPQELCHSGKISAKSGNSLFKSFHFTDWYNYTGEGDQVIFYEGVNFSPSHGFKCLAEGDNKRWMGNKARFYALVYKKMAYYRSLSFVNVSYSYGGKAKPTAICKDNTLTLNNPTFISKESNYVDYYYESDANFTLEGCDEFIVPLCVFNGHSRGSSSDPANKYYMDSQMYYNMDTGVFYGFNSTLDVGNTAQNPGLDLTCIYYALTPGNYKAVSLEYLLTIPSKAICLRKPKRFMPVQVVDSRWNNAKHSDNMTAVACQTPYCLFRNTSSGYNGSTHDVHHGGFHFRKLLSGLLYNVSCIAQQGAFFYNNVSSQWPVLGYGQCPTAANIEFIAPVCLYDPLPVILLGVLLGIAVLIIVFLLFYFMTDSGVRLHEA.

The signal sequence occupies residues 1-22; that stretch reads MGSMCIAMAPRTLLLLIGCQLA. The tract at residues 12–132 is esterase domain 1; that stretch reads TLLLLIGCQL…DNKRWMGNKA (121 aa). The Virion surface portion of the chain corresponds to 23-407; it reads LGFNEPLNVV…PVCLYDPLPV (385 aa). Catalysis depends on Ser45, which acts as the Nucleophile. A disulfide bond links Cys49 and Cys70. 5 N-linked (GlcNAc...) asparagine; by host glycosylation sites follow: Asn94, Asn152, Asn196, Asn246, and Asn316. Cys118 and Cys167 are disulfide-bonded. The interval 133-281 is receptor binding; the sequence is RFYALVYKKM…GNYKAVSLEY (149 aa). Cystine bridges form between Cys202/Cys291 and Cys210/Cys264. The esterase domain 2 stretch occupies residues 282–395; sequence LLTIPSKAIC…QCPTAANIEF (114 aa). A disulfide bond links Cys322 and Cys327. N-linked (GlcNAc...) asparagine; by host glycosylation is found at Asn331 and Asn337. Active-site charge relay system residues include Asp342 and His345. Asn360 and Asn374 each carry an N-linked (GlcNAc...) asparagine; by host glycan. A disulfide bridge connects residues Cys363 and Cys387. Residues 408 to 428 form a helical membrane-spanning segment; the sequence is ILLGVLLGIAVLIIVFLLFYF. Residues 429–439 are Intravirion-facing; sequence MTDSGVRLHEA.

Belongs to the influenza type C/coronaviruses hemagglutinin-esterase family. As to quaternary structure, homodimer; disulfide-linked. Forms a complex with the M protein in the pre-Golgi. Associates then with S-M complex to form a ternary complex S-M-HE. N-glycosylated in the host RER.

The protein localises to the virion membrane. It localises to the host cell membrane. It catalyses the reaction N-acetyl-9-O-acetylneuraminate + H2O = N-acetylneuraminate + acetate + H(+). The catalysed reaction is N-acetyl-4-O-acetylneuraminate + H2O = N-acetylneuraminate + acetate + H(+). Functionally, structural protein that makes short spikes at the surface of the virus. Contains receptor binding and receptor-destroying activities. Mediates de-O-acetylation of N-acetyl-4-O-acetylneuraminic acid, which is probably the receptor determinant recognized by the virus on the surface of erythrocytes and susceptible cells. This receptor-destroying activity is important for virus release as it probably helps preventing self-aggregation and ensures the efficient spread of the progeny virus from cell to cell. May serve as a secondary viral attachment protein for initiating infection, the spike protein being the major one. May become a target for both the humoral and the cellular branches of the immune system. This chain is Hemagglutinin-esterase, found in Puffinosis coronavirus (PV).